Here is a 242-residue protein sequence, read N- to C-terminus: Small ribosomal subunit protein uS3 (242 aa).

Residues 39–110 (IRRFIHKKYG…QVRINVVEVE (72 aa)) form the KH type-2 domain. A disordered region spans residues 216–242 (QSMPVGASPRRRGNRRPQQFEDRSNEG). Residues 233 to 242 (QQFEDRSNEG) show a composition bias toward basic and acidic residues.

Belongs to the universal ribosomal protein uS3 family. As to quaternary structure, part of the 30S ribosomal subunit. Forms a tight complex with proteins S10 and S14.

Binds the lower part of the 30S subunit head. Binds mRNA in the 70S ribosome, positioning it for translation. The sequence is that of Small ribosomal subunit protein uS3 from Prochlorococcus marinus (strain MIT 9303).